Reading from the N-terminus, the 330-residue chain is tRNA uridine(34) hydroxylase (330 aa).

One can recognise a Rhodanese domain in the interval 123–217; it reads SDPEVILVDT…YLEEVKQEES (95 aa). Cysteine 177 serves as the catalytic Cysteine persulfide intermediate.

The protein belongs to the TrhO family.

The catalysed reaction is uridine(34) in tRNA + AH2 + O2 = 5-hydroxyuridine(34) in tRNA + A + H2O. Functionally, catalyzes oxygen-dependent 5-hydroxyuridine (ho5U) modification at position 34 in tRNAs. The sequence is that of tRNA uridine(34) hydroxylase from Shewanella sp. (strain MR-4).